A 298-amino-acid chain; its full sequence is tRNA pseudouridine synthase-like 1 (298 aa).

Catalysis depends on aspartate 60, which acts as the Nucleophile. Residue tyrosine 124 coordinates substrate.

Belongs to the tRNA pseudouridine synthase TruA family.

It catalyses the reaction a uridine in tRNA = a pseudouridine in tRNA. The protein is tRNA pseudouridine synthase-like 1 (pusl1) of Xenopus laevis (African clawed frog).